The sequence spans 459 residues: Probable multidrug resistance protein NorM (459 aa).

Transmembrane regions (helical) follow at residues 20–40 (LTAL…IGFV), 53–73 (LAAV…FMGI), 100–120 (GIWF…AAIT), 132–152 (VEGT…AAMV), 168–188 (LIML…YIFV), 202–222 (CGLA…IYIA), 252–272 (APIG…VFLI), 285–305 (VGIS…SAGT), 325–345 (GVSL…LVLF), 358–378 (AVLS…PADF), 395–415 (VPMF…GYLL), and 423–443 (IYGF…ALVW).

Belongs to the multi antimicrobial extrusion (MATE) (TC 2.A.66.1) family.

The protein localises to the cell inner membrane. In terms of biological role, multidrug efflux pump. This chain is Probable multidrug resistance protein NorM (norM), found in Neisseria meningitidis serogroup A / serotype 4A (strain DSM 15465 / Z2491).